The following is a 449-amino-acid chain: Histone PARylation factor 1-like (449 aa).

The CCHC-type zinc finger occupies 3–28 (KEDCKYWDKCYQQNPAHLSKYNHPKK). The segment at 18-93 (AHLSKYNHPK…AKGSYEAETE (76 aa)) is disordered. Basic and acidic residues-rich tracts occupy residues 28-41 (KQQE…EGKK) and 54-69 (EQKK…KDKS). Ser72 is modified (phosphoserine). Glu384 acts as the Proton donor in catalysis.

This sequence belongs to the HPF1 family.

It localises to the chromosome. The protein resides in the nucleus. Its function is as follows. Cofactor for serine ADP-ribosylation that confers serine specificity on Parp. Switches the amino acid specificity of Parp from aspartate or glutamate to serine residues. Acts by completing the active site of Parp: forms a composite active site composed of residues from HPF1/CG1218 and Parp. This Drosophila melanogaster (Fruit fly) protein is Histone PARylation factor 1-like.